The following is a 393-amino-acid chain: MVAAKTIKGMVDKAELPDNIKEELYAKLIEYNKKYKLKKAEVQAIIDETVKEYQKALIEPGEAIGTVAAQSIGEPSTQMTLNTFHYAGVAEINVTLGLPRIIEIVDARKNPSTPIMTVYLDEEHRYDREKALEVARRIEGTSLENLARETTIDILNFEFIVEIDPERLEKAGLDMERIQRKLESSFKSAEFEVDGYTVIMRPKKVGKISSLRRLAEKVKKHRLKGLSRVGKTVITKDSKTGEYIIRTEGSNFKQVLKVPGVDPTRTRTNDIREIAEVLGIEAARNAIIDEILKTMEEQGLEVDVRHIMLVADMMTLDGVIRPIGRHGIVGEKASVLARAAFEITTQHLFEAAERGAVDPLNGVVENVLIGQPVPVGTGTVKLAMNLPLRPKRE.

The protein belongs to the RNA polymerase beta' chain family. In terms of assembly, part of the RNA polymerase complex.

The protein resides in the cytoplasm. The enzyme catalyses RNA(n) + a ribonucleoside 5'-triphosphate = RNA(n+1) + diphosphate. In terms of biological role, DNA-dependent RNA polymerase (RNAP) catalyzes the transcription of DNA into RNA using the four ribonucleoside triphosphates as substrates. Forms part of the jaw domain. This Thermococcus celer protein is DNA-directed RNA polymerase subunit Rpo1C.